We begin with the raw amino-acid sequence, 278 residues long: NAD kinase (278 aa).

Asp-56 serves as the catalytic Proton acceptor. Residues 56 to 57 (DG), 132 to 133 (NE), Arg-158, Asp-160, and 171 to 176 (TAYNKS) each bind NAD(+).

The protein belongs to the NAD kinase family. The cofactor is a divalent metal cation.

It localises to the cytoplasm. The catalysed reaction is NAD(+) + ATP = ADP + NADP(+) + H(+). Involved in the regulation of the intracellular balance of NAD and NADP, and is a key enzyme in the biosynthesis of NADP. Catalyzes specifically the phosphorylation on 2'-hydroxyl of the adenosine moiety of NAD to yield NADP. This Streptococcus agalactiae serotype V (strain ATCC BAA-611 / 2603 V/R) protein is NAD kinase.